We begin with the raw amino-acid sequence, 185 residues long: Ribosome-recycling factor (185 aa).

It belongs to the RRF family.

Its subcellular location is the cytoplasm. Responsible for the release of ribosomes from messenger RNA at the termination of protein biosynthesis. May increase the efficiency of translation by recycling ribosomes from one round of translation to another. This Thioalkalivibrio sulfidiphilus (strain HL-EbGR7) protein is Ribosome-recycling factor.